We begin with the raw amino-acid sequence, 1177 residues long: Chromosome partition protein Smc (1177 aa).

Position 34 to 41 (34 to 41) interacts with ATP; the sequence is ANGSGKSN. Residues 167–506 are a coiled coil; sequence SGIAEYDSKK…IAAEAQREVR (340 aa). The SMC hinge domain maps to 521-627; sequence GIYGTLAELI…VIVNSMEEAR (107 aa). Residues 659–1012 are a coiled coil; the sequence is LAVDTTKLRE…NEIEKEKKNV (354 aa).

It belongs to the SMC family. Homodimer.

The protein resides in the cytoplasm. Functionally, required for chromosome condensation and partitioning. Binds single-stranded but not double-stranded DNA. This Pyrococcus furiosus (strain ATCC 43587 / DSM 3638 / JCM 8422 / Vc1) protein is Chromosome partition protein Smc.